A 461-amino-acid polypeptide reads, in one-letter code: Argininosuccinate lyase (461 aa).

Belongs to the lyase 1 family. Argininosuccinate lyase subfamily.

It is found in the cytoplasm. The enzyme catalyses 2-(N(omega)-L-arginino)succinate = fumarate + L-arginine. The protein operates within amino-acid biosynthesis; L-arginine biosynthesis; L-arginine from L-ornithine and carbamoyl phosphate: step 3/3. In Aeromonas salmonicida (strain A449), this protein is Argininosuccinate lyase.